Consider the following 459-residue polypeptide: Serine protease HTRA3 (459 aa).

The signal sequence occupies residues 1 to 23 (MQARALLPATLATLATLAVSVLA). An IGFBP N-terminal domain is found at 27–90 (PAAPCPARCD…ECVRGVCRCR (64 aa)). 8 cysteine pairs are disulfide-bonded: C31-C54, C35-C56, C40-C57, C45-C60, C68-C82, C76-C87, C89-C107, and C96-C132. The Kazal-like domain maps to 76–134 (CGDSLECVRGVCRCRWTHTVCGTDGHTYADVCALQAASRRALQISGTPVRQLQKGACPS). Residues 181 to 346 (GSGFIMSEAG…AIPSDRITRF (166 aa)) are serine protease. Residues H197, D233, and S311 each act as charge relay system in the active site. The PDZ domain occupies 365 to 450 (IRMRTITPSL…EVRRGNDDLL (86 aa)).

The protein belongs to the peptidase S1C family. As to quaternary structure, homotrimer. Interacts with TGFB1; the interaction inhibits TGFB-mediated signaling. Interacts with BMP4; the interaction inhibits BMP4-mediated signaling. Interacts with TGFB2, GDF5 and MYH9. In terms of tissue distribution, expressed in the ovary, essentially in granulosa cells in a follicle-stage specific manner. Highest levels found in large luteinizing granulosa cells.

It localises to the secreted. Functionally, serine protease that cleaves beta-casein/CSN2 as well as several extracellular matrix (ECM) proteoglycans such as decorin/DCN, biglycan/BGN and fibronectin/FN1. Inhibits signaling mediated by TGF-beta family proteins possibly indirectly by degradation of these ECM proteoglycans. May act as a tumor suppressor. Negatively regulates, in vitro, trophoblast invasion during placental development and may be involved in the development of the placenta in vivo. May also have a role in ovarian development, granulosa cell differentiation and luteinization. This Rattus norvegicus (Rat) protein is Serine protease HTRA3 (Htra3).